Reading from the N-terminus, the 100-residue chain is Urease subunit gamma (100 aa).

The protein belongs to the urease gamma subunit family. Heterotrimer of UreA (gamma), UreB (beta) and UreC (alpha) subunits. Three heterotrimers associate to form the active enzyme.

Its subcellular location is the cytoplasm. The enzyme catalyses urea + 2 H2O + H(+) = hydrogencarbonate + 2 NH4(+). The protein operates within nitrogen metabolism; urea degradation; CO(2) and NH(3) from urea (urease route): step 1/1. This chain is Urease subunit gamma, found in Marinomonas sp. (strain MWYL1).